Consider the following 92-residue polypeptide: Small ribosomal subunit protein uS19 (92 aa).

The protein belongs to the universal ribosomal protein uS19 family.

Functionally, protein S19 forms a complex with S13 that binds strongly to the 16S ribosomal RNA. The protein is Small ribosomal subunit protein uS19 of Rhodospirillum centenum (strain ATCC 51521 / SW).